The primary structure comprises 153 residues: Pheromone-binding protein Gp-9 (153 aa).

Residues 1 to 19 (MKTFVLHIFIFAFVAFASA) form the signal peptide. 3 disulfides stabilise this stretch: C37-C77, C73-C129, and C118-C138.

This sequence belongs to the PBP/GOBP family. Homodimer.

It localises to the secreted. Colony queen number, a major feature of social organization, is associated with worker genotype for Gp-9. Colonies are headed by either a single reproductive queen (monogyne form) or multiple queens (polygyne form). Differences in worker Gp-9 genotypes between social forms may cause differences in workers' abilities to recognize queens and regulate their numbers. The sequence is that of Pheromone-binding protein Gp-9 from Solenopsis amblychila (Desert fire ant).